A 219-amino-acid polypeptide reads, in one-letter code: UPF0502 protein Gura_3445 (219 aa).

Positions 162-181 (AGEPDLPDDTPAPPPEPARQ) are disordered.

Belongs to the UPF0502 family.

The polypeptide is UPF0502 protein Gura_3445 (Geotalea uraniireducens (strain Rf4) (Geobacter uraniireducens)).